The sequence spans 322 residues: Protein-L-isoaspartate O-methyltransferase (322 aa).

Positions 1-101 (MSGERAKRFP…AKQGDRSAAP (101 aa)) are disordered. Over residues 14–29 (EDLKREPRKPEGRVAE) the composition is skewed to basic and acidic residues. 2 stretches are compositionally biased toward low complexity: residues 33–51 (AGDA…PAAA) and 76–91 (HAPA…PQGG). The active site involves serine 170.

The protein belongs to the methyltransferase superfamily. L-isoaspartyl/D-aspartyl protein methyltransferase family.

It is found in the cytoplasm. The catalysed reaction is [protein]-L-isoaspartate + S-adenosyl-L-methionine = [protein]-L-isoaspartate alpha-methyl ester + S-adenosyl-L-homocysteine. In terms of biological role, catalyzes the methyl esterification of L-isoaspartyl residues in peptides and proteins that result from spontaneous decomposition of normal L-aspartyl and L-asparaginyl residues. It plays a role in the repair and/or degradation of damaged proteins. The protein is Protein-L-isoaspartate O-methyltransferase of Burkholderia pseudomallei (strain 1106a).